Here is a 160-residue protein sequence, read N- to C-terminus: Cytochrome b6-f complex subunit 4 (160 aa).

3 consecutive transmembrane segments (helical) span residues Leu36–Ile56, Leu95–Glu115, and Thr131–Ile151.

This sequence belongs to the cytochrome b family. PetD subfamily. The 4 large subunits of the cytochrome b6-f complex are cytochrome b6, subunit IV (17 kDa polypeptide, petD), cytochrome f and the Rieske protein, while the 4 small subunits are petG, petL, petM and petN. The complex functions as a dimer.

The protein localises to the plastid. The protein resides in the chloroplast thylakoid membrane. In terms of biological role, component of the cytochrome b6-f complex, which mediates electron transfer between photosystem II (PSII) and photosystem I (PSI), cyclic electron flow around PSI, and state transitions. In Acorus calamus (Sweet flag), this protein is Cytochrome b6-f complex subunit 4.